Here is a 198-residue protein sequence, read N- to C-terminus: Recombination protein RecR (198 aa).

The C4-type zinc finger occupies 57-72 (CSVCGRLTDDDPCIIC). The region spanning 80 to 175 (TKILVVEDSK…KVTRLARGLA (96 aa)) is the Toprim domain.

It belongs to the RecR family.

Functionally, may play a role in DNA repair. It seems to be involved in an RecBC-independent recombinational process of DNA repair. It may act with RecF and RecO. The protein is Recombination protein RecR of Streptococcus thermophilus (strain CNRZ 1066).